We begin with the raw amino-acid sequence, 50 residues long: Thymosin beta-4 (50 aa).

Residues 1 to 50 (MLLPATMSDKPDMAEIEKFDKSKLKKTETQEKNPLPSKETIEQEKQAGES) are disordered. Ser8 carries the phosphoserine modification. Residues 9 to 31 (DKPDMAEIEKFDKSKLKKTETQE) are compositionally biased toward basic and acidic residues. Lys10 is modified (N6-acetyllysine). Position 18 is an N6-acetyllysine; alternate (Lys18). A Glycyl lysine isopeptide (Lys-Gly) (interchain with G-Cter in SUMO2); alternate cross-link involves residue Lys18. Thr29 bears the Phosphothreonine mark. Lys32 carries the post-translational modification N6-acetyllysine. Ser37 carries the phosphoserine modification. Lys38 bears the N6-acetyllysine mark. Residues 39–50 (ETIEQEKQAGES) show a composition bias toward basic and acidic residues. Thr40 bears the Phosphothreonine mark. Lys45 is modified (N6-acetyllysine).

This sequence belongs to the thymosin beta family. Identified in a complex composed of ACTA1, COBL, GSN AND TMSB4X. Interacts with SERPINB1. AcSDKP is inactivated by ACE, which removes the dipeptide Lys-Pro from its C-terminus. As to expression, originally found in thymus but it is widely distributed in many tissues.

The protein resides in the cytoplasm. It localises to the cytoskeleton. Functionally, plays an important role in the organization of the cytoskeleton. Binds to and sequesters actin monomers (G actin) and therefore inhibits actin polymerization. Its function is as follows. Potent inhibitor of bone marrow derived stem cell differentiation. Acts by inhibits the entry of hematopoietic pluripotent stem cells into the S-phase. The protein is Thymosin beta-4 (Tmsb4x) of Mus musculus (Mouse).